The primary structure comprises 1053 residues: Serine/threonine-protein phosphatase 6 regulatory ankyrin repeat subunit A (1053 aa).

ANK repeat units lie at residues 40 to 69 (EKRT…RVNA), 73 to 102 (KWLT…DVNA), 106 to 135 (NWQT…NVNV), 139 to 168 (AGRT…NINA), 172 to 201 (KDRR…EVTC), 205 to 234 (KSYT…DMNE), 238 to 267 (YGNT…IVNQ), 271 to 301 (KGFT…DVNM), 305 to 334 (DGKT…VIDC), 338 to 367 (NGNT…DTAK), 371 to 400 (HGMF…DIDT), 404 to 433 (FGRT…DFNK), 437 to 466 (FGRS…SVND), 470 to 500 (RGCT…NPGI), 504 to 534 (QGYN…DVLM), 549 to 578 (ATIS…DLDV), 582 to 611 (SGRT…SILV), 616 to 645 (LKRT…PQNA), 652 to 681 (NGQT…NVDA), 685 to 714 (WGRT…KCLL), 718 to 747 (RGRT…SMDA), 755 to 784 (HGYT…FQKT), 787 to 817 (NAFS…SIVN), 822 to 851 (KGRT…QVNS), 855 to 885 (TGKT…ELTL), 889 to 918 (SKNT…DRNL), and 925 to 954 (ALQT…SVLA). A phosphoserine mark is found at serine 1007 and serine 1011.

Protein phosphatase 6 (PP6) holoenzyme is proposed to be a heterotrimeric complex formed by the catalytic subunit, a SAPS domain-containing subunit (PP6R) and an ankyrin repeat-domain containing regulatory subunit (ARS). Interacts with PPP6C, PPP6R1 and PPP6R3. Interacts with PPP1C and HNRPK. Post-translationally, ubiquitinated by the ECS(RAB40C) complex leading to its degradation and decreased PP6 activity.

It localises to the nucleus. It is found in the nucleoplasm. The protein resides in the cytoplasm. The protein localises to the cytosol. Its subcellular location is the cell projection. It localises to the lamellipodium. Regulatory subunit of protein phosphatase 6 (PP6) that may be involved in the recognition of phosphoprotein substrates. Involved in the PP6-mediated dephosphorylation of NFKBIE opposing its degradation in response to TNF-alpha. Selectively inhibits the phosphatase activity of PPP1C. Targets PPP1C to modulate HNRPK phosphorylation. Involved in the PP6-mediated dephosphorylation of MOB1 and induced focal adhesion assembly during cell migration. The polypeptide is Serine/threonine-protein phosphatase 6 regulatory ankyrin repeat subunit A (Homo sapiens (Human)).